A 425-amino-acid chain; its full sequence is Dihydroorotase (425 aa).

The Zn(2+) site is built by His59 and His61. Residues 61 to 63 and Asn93 each bind substrate; that span reads HLR. Zn(2+) is bound by residues Asp151, His178, and His231. Asn277 serves as a coordination point for substrate. Asp304 provides a ligand contact to Zn(2+). Asp304 is a catalytic residue. Substrate-binding positions include His308 and 322-323; that span reads FG.

It belongs to the metallo-dependent hydrolases superfamily. DHOase family. Class I DHOase subfamily. The cofactor is Zn(2+).

The catalysed reaction is (S)-dihydroorotate + H2O = N-carbamoyl-L-aspartate + H(+). Its pathway is pyrimidine metabolism; UMP biosynthesis via de novo pathway; (S)-dihydroorotate from bicarbonate: step 3/3. In terms of biological role, catalyzes the reversible cyclization of carbamoyl aspartate to dihydroorotate. The polypeptide is Dihydroorotase (Staphylococcus epidermidis (strain ATCC 12228 / FDA PCI 1200)).